Here is a 126-residue protein sequence, read N- to C-terminus: Holo-[acyl-carrier-protein] synthase (126 aa).

Mg(2+)-binding residues include Asp9 and Glu58.

This sequence belongs to the P-Pant transferase superfamily. AcpS family. Requires Mg(2+) as cofactor.

It is found in the cytoplasm. The catalysed reaction is apo-[ACP] + CoA = holo-[ACP] + adenosine 3',5'-bisphosphate + H(+). Transfers the 4'-phosphopantetheine moiety from coenzyme A to a Ser of acyl-carrier-protein. This Pectobacterium atrosepticum (strain SCRI 1043 / ATCC BAA-672) (Erwinia carotovora subsp. atroseptica) protein is Holo-[acyl-carrier-protein] synthase.